The chain runs to 132 residues: Small ribosomal subunit protein uS8 (132 aa).

Belongs to the universal ribosomal protein uS8 family. Part of the 30S ribosomal subunit. Contacts proteins S5 and S12.

Its function is as follows. One of the primary rRNA binding proteins, it binds directly to 16S rRNA central domain where it helps coordinate assembly of the platform of the 30S subunit. In Rhodopseudomonas palustris (strain BisB18), this protein is Small ribosomal subunit protein uS8.